A 640-amino-acid polypeptide reads, in one-letter code: Threonine--tRNA ligase (640 aa).

Residues 1–59 (MKIKVKLPDGKEKEYDRGITPAEIAKELGVKKAIGAVVNGELWDLKRPIENDCELRLVT) form the TGS domain. Residues 240-531 (DHRKLGPHLE…LIEHFAGAFP (292 aa)) are catalytic. Residues C332, H383, and H508 each coordinate Zn(2+).

This sequence belongs to the class-II aminoacyl-tRNA synthetase family. In terms of assembly, homodimer. Zn(2+) is required as a cofactor.

The protein localises to the cytoplasm. It carries out the reaction tRNA(Thr) + L-threonine + ATP = L-threonyl-tRNA(Thr) + AMP + diphosphate + H(+). Its function is as follows. Catalyzes the attachment of threonine to tRNA(Thr) in a two-step reaction: L-threonine is first activated by ATP to form Thr-AMP and then transferred to the acceptor end of tRNA(Thr). Also edits incorrectly charged L-seryl-tRNA(Thr). The protein is Threonine--tRNA ligase of Thermotoga petrophila (strain ATCC BAA-488 / DSM 13995 / JCM 10881 / RKU-1).